A 188-amino-acid polypeptide reads, in one-letter code: Large ribosomal subunit protein bL32m (188 aa).

Zn(2+) contacts are provided by Cys110, Cys113, Cys123, and Cys126. The tract at residues 164–188 (TPSEQDQGKRIIERDRKRPSWFTQN) is disordered. Residues 169–181 (DQGKRIIERDRKR) are compositionally biased toward basic and acidic residues.

The protein belongs to the bacterial ribosomal protein bL32 family. In terms of assembly, component of the mitochondrial large ribosomal subunit (mt-LSU). Mature mammalian 55S mitochondrial ribosomes consist of a small (28S) and a large (39S) subunit. The 28S small subunit contains a 12S ribosomal RNA (12S mt-rRNA) and 30 different proteins. The 39S large subunit contains a 16S rRNA (16S mt-rRNA), a copy of mitochondrial valine transfer RNA (mt-tRNA(Val)), which plays an integral structural role, and 52 different proteins. bL32m has a zinc binding site. In terms of processing, MRPL32 precursor is processed by the m-AAA protease (composed of AFG3L2 and SPG7), which cleaves the N-terminal transit peptide. Cleavage by the m-AAA protease takes place prior to assembly into the large subunit, an essential step for mitochondrial ribosome (mitoribosome) assembly. Proper processing by the m-AAA protease is dependent on the zinc-binding region within the tightly folded C-terminal domain of MRPL32: zinc-dependent folding halts degradation initiated from the N-terminus and triggers the release of mature MRPL32.

Its subcellular location is the mitochondrion. Component of the mitochondrial large ribosomal subunit (mt-LSU). The mitochondrial ribosome (mitoribosome) is a large ribonucleoprotein complex responsible for the synthesis of proteins inside mitochondria. This is Large ribosomal subunit protein bL32m (MRPL32) from Homo sapiens (Human).